We begin with the raw amino-acid sequence, 167 residues long: Large ribosomal subunit protein uL10 (167 aa).

This sequence belongs to the universal ribosomal protein uL10 family. In terms of assembly, part of the ribosomal stalk of the 50S ribosomal subunit. The N-terminus interacts with L11 and the large rRNA to form the base of the stalk. The C-terminus forms an elongated spine to which L12 dimers bind in a sequential fashion forming a multimeric L10(L12)X complex.

In terms of biological role, forms part of the ribosomal stalk, playing a central role in the interaction of the ribosome with GTP-bound translation factors. This chain is Large ribosomal subunit protein uL10, found in Streptococcus mutans serotype c (strain ATCC 700610 / UA159).